The primary structure comprises 1081 residues: Probable cellulose synthase A catalytic subunit 8 [UDP-forming] (1081 aa).

Over 1–277 (MDGDADAVKS…PSSRINPYRM (277 aa)) the chain is Cytoplasmic. Residues cysteine 19, cysteine 22, cysteine 38, cysteine 41, cysteine 46, cysteine 49, cysteine 61, and cysteine 64 each contribute to the Zn(2+) site. Residues 19 to 65 (CQICGDGVGTTAEGDVFAACDVCGFPVCRPCYEYERKDGTQACPQCK) form an RING-type; degenerate zinc finger. The segment at 72–148 (KGSPAIRGEE…YDSGEIPRGY (77 aa)) is disordered. Over residues 81-91 (EGEDTDADDVS) the composition is skewed to acidic residues. Basic and acidic residues predominate over residues 103-112 (QKQKIADRMR). A helical transmembrane segment spans residues 278–298 (VIVLRLVVLSIFLHYRITNPV). At 299–300 (RN) the chain is on the extracellular side. Residues 301–321 (AYPLWLLSVICEIWFALSWIL) traverse the membrane as a helical segment. The Cytoplasmic portion of the chain corresponds to 322-864 (DQFPKWFPIN…INTTIYPLTS (543 aa)). The UDP-alpha-D-glucose site is built by serine 360, lysine 366, glutamate 367, and aspartate 396. Aspartate 396 is an active-site residue. Residues 450–477 (VKDRRAMKREYEEFKVRINGLVAKAQKV) adopt a coiled-coil conformation. Lysine 537 is a binding site for UDP-alpha-D-glucose. Residues lysine 538 and aspartate 562 each coordinate Mn(2+). Residues 660–684 (SLCGGRKKASKSKKKSSDKKKSNKH) form a disordered region. A compositionally biased stretch (basic residues) spans 664 to 682 (GRKKASKSKKKSSDKKKSN). Aspartate 781 is an active-site residue. Residues 865–885 (IPLLIYCVLPAICLLTGKFII) traverse the membrane as a helical segment. Residues 886–890 (PEISN) lie on the Extracellular side of the membrane. The helical transmembrane segment at 891–911 (FASIWFISLFISIFATGILEM) threads the bilayer. Over 912 to 926 (RWSGVGIDEWWRNEQ) the chain is Cytoplasmic. The helical transmembrane segment at 927 to 947 (FWVIGGISAHLFAVFQGLLKV) threads the bilayer. Residues 948 to 977 (LAGIDTNFTVTSKASDEDGDFAELYMFKWT) lie on the Extracellular side of the membrane. N-linked (GlcNAc...) asparagine glycosylation is present at asparagine 954. The chain crosses the membrane as a helical span at residues 978–998 (TLLIPPTTILIINLVGVVAGI). Residues 999-1009 (SYAINSGYQSW) are Cytoplasmic-facing. A helical transmembrane segment spans residues 1010-1030 (GPLFGKLFFAFWVIVHLYPFL). Over 1031-1039 (KGLMGRQNR) the chain is Extracellular. The chain crosses the membrane as a helical span at residues 1040-1060 (TPTIVVVWAILLASIFSLLWV). The Cytoplasmic segment spans residues 1061–1081 (RIDPFTTRVTGPDTQTCGINC).

This sequence belongs to the glycosyltransferase 2 family. Plant cellulose synthase subfamily. Mn(2+) is required as a cofactor. Requires Zn(2+) as cofactor.

It localises to the cell membrane. It carries out the reaction [(1-&gt;4)-beta-D-glucosyl](n) + UDP-alpha-D-glucose = [(1-&gt;4)-beta-D-glucosyl](n+1) + UDP + H(+). It participates in glycan metabolism; plant cellulose biosynthesis. In terms of biological role, probable catalytic subunit of cellulose synthase terminal complexes ('rosettes'), required for beta-1,4-glucan microfibril crystallization, a major mechanism of the cell wall formation. This Oryza sativa subsp. japonica (Rice) protein is Probable cellulose synthase A catalytic subunit 8 [UDP-forming] (CESA8).